The following is a 702-amino-acid chain: Elongation factor G 1 (702 aa).

Residues 8–290 (ERYRNIGISA…AVIDFLPSPV (283 aa)) enclose the tr-type G domain. GTP is bound by residues 17–24 (AHIDAGKT), 88–92 (DTPGH), and 142–145 (NKMD).

It belongs to the TRAFAC class translation factor GTPase superfamily. Classic translation factor GTPase family. EF-G/EF-2 subfamily.

The protein resides in the cytoplasm. Catalyzes the GTP-dependent ribosomal translocation step during translation elongation. During this step, the ribosome changes from the pre-translocational (PRE) to the post-translocational (POST) state as the newly formed A-site-bound peptidyl-tRNA and P-site-bound deacylated tRNA move to the P and E sites, respectively. Catalyzes the coordinated movement of the two tRNA molecules, the mRNA and conformational changes in the ribosome. The chain is Elongation factor G 1 from Cupriavidus pinatubonensis (strain JMP 134 / LMG 1197) (Cupriavidus necator (strain JMP 134)).